Reading from the N-terminus, the 491-residue chain is E3 ubiquitin-protein ligase Hakai (491 aa).

2 disordered regions span residues 1–20 and 33–61; these read MDHT…LGGL and KQAS…GDEE. The RING-type zinc-finger motif lies at 109–149; sequence CDKCGLPIKVYGRMIPCKHVFCYDCAILHEKKGDKMCPGCS. The interval 148 to 206 is HYB domain; the sequence is CSDPVQRIEQCTRGSLFMCSIVQGCKRTYLSQRDLQAHINHRHMRAGKPVTRASLENVH. The C2H2-type zinc finger occupies 164–190; sequence FMCSIVQGCKRTYLSQRDLQAHINHRH. Phosphoserine occurs at positions 201, 285, and 290. The disordered stretch occupies residues 255–491; sequence QPHEDIRAPP…DQTRYRPYYQ (237 aa). Pro residues-rich tracts occupy residues 342–359, 372–389, and 399–423; these read APPP…PHPP, APPP…PPPG, and MNHP…PPHH. Over residues 427-442 the composition is skewed to polar residues; that stretch reads NSLPQFTEDQGTLSPP. Pro residues predominate over residues 457–478; that stretch reads PRGPPPPPRMQGPPSQTPLPGP.

This sequence belongs to the Hakai family. In terms of assembly, homodimer. Interacts with tyrosine-phosphorylated SRC substrates. Component of the WMM complex, a N6-methyltransferase complex composed of a catalytic subcomplex, named MAC, and of an associated subcomplex, named MACOM. The MAC subcomplex is composed of METTL3 and METTL14. The MACOM subcomplex is composed of WTAP, ZC3H13, CBLL1/HAKAI, VIRMA, and, in some cases of RBM15 (RBM15 or RBM15B). Also a component of a MACOM-like complex, named WTAP complex, composed of WTAP, ZC3H13, CBLL1, VIRMA, RBM15, BCLAF1 and THRAP3. Post-translationally, phosphorylated on tyrosine residues. In terms of tissue distribution, detected in heart, brain, spleen, lung, liver, skeletal muscle, kidney and testis.

The protein resides in the nucleus speckle. Its subcellular location is the nucleus. It localises to the nucleoplasm. The protein localises to the cytoplasm. It carries out the reaction S-ubiquitinyl-[E2 ubiquitin-conjugating enzyme]-L-cysteine + [acceptor protein]-L-lysine = [E2 ubiquitin-conjugating enzyme]-L-cysteine + N(6)-ubiquitinyl-[acceptor protein]-L-lysine.. It participates in protein modification; protein ubiquitination. In terms of biological role, E3 ubiquitin-protein ligase that mediates ubiquitination of several tyrosine-phosphorylated Src substrates, including CDH1, CTTN and DOK1. Targets CDH1 for endocytosis and degradation. Associated component of the WMM complex, a complex that mediates N6-methyladenosine (m6A) methylation of RNAs, a modification that plays a role in the efficiency of mRNA splicing and RNA processing. Its function in the WMM complex is unknown. The polypeptide is E3 ubiquitin-protein ligase Hakai (Mus musculus (Mouse)).